The primary structure comprises 396 residues: Elongation factor Tu 1 (396 aa).

The tr-type G domain occupies 10–206 (KPHVNVGTIG…ALDTYIPTPE (197 aa)). The interval 19 to 26 (GHVDHGKT) is G1. 19–26 (GHVDHGKT) is a binding site for GTP. T26 serves as a coordination point for Mg(2+). The G2 stretch occupies residues 60-64 (GITIN). Residues 81-84 (DCPG) are G3. GTP contacts are provided by residues 81–85 (DCPGH) and 136–139 (NKCD). Positions 136 to 139 (NKCD) are G4. Residues 174 to 176 (SAK) form a G5 region.

Belongs to the TRAFAC class translation factor GTPase superfamily. Classic translation factor GTPase family. EF-Tu/EF-1A subfamily. As to quaternary structure, monomer.

The protein localises to the cytoplasm. It carries out the reaction GTP + H2O = GDP + phosphate + H(+). In terms of biological role, GTP hydrolase that promotes the GTP-dependent binding of aminoacyl-tRNA to the A-site of ribosomes during protein biosynthesis. This is Elongation factor Tu 1 from Acidovorax sp. (strain JS42).